The primary structure comprises 506 residues: GTPase Der (506 aa).

EngA-type G domains lie at 3–166 (PVVA…GEQL) and 218–391 (IKIA…ACAT). Residues 9-16 (GRPNVGKS), 56-60 (DTGGI), 118-121 (NKTD), 224-231 (GRPNVGKS), 271-275 (DTAGV), and 336-339 (NKWD) each bind GTP. Residues 392–476 (QKTSTSMLTR…PIRIQFQEGN (85 aa)) enclose the KH-like domain.

The protein belongs to the TRAFAC class TrmE-Era-EngA-EngB-Septin-like GTPase superfamily. EngA (Der) GTPase family. In terms of assembly, associates with the 50S ribosomal subunit.

Functionally, GTPase that plays an essential role in the late steps of ribosome biogenesis. The chain is GTPase Der from Actinobacillus pleuropneumoniae serotype 5b (strain L20).